The following is a 633-amino-acid chain: Phosphomethylpyrimidine synthase (633 aa).

Residues 1-13 are compositionally biased toward polar residues; the sequence is MNIRSNPDTTLPA. Residues 1 to 20 are disordered; the sequence is MNIRSNPDTTLPAVTTGPLP. Residues asparagine 221, methionine 250, tyrosine 279, histidine 315, 335-337, 376-379, and glutamate 415 each bind substrate; these read SRG and DGLR. A Zn(2+)-binding site is contributed by histidine 419. Residue tyrosine 442 participates in substrate binding. Histidine 483 contributes to the Zn(2+) binding site. Cysteine 563, cysteine 566, and cysteine 571 together coordinate [4Fe-4S] cluster.

The protein belongs to the ThiC family. In terms of assembly, homodimer. It depends on [4Fe-4S] cluster as a cofactor.

The enzyme catalyses 5-amino-1-(5-phospho-beta-D-ribosyl)imidazole + S-adenosyl-L-methionine = 4-amino-2-methyl-5-(phosphooxymethyl)pyrimidine + CO + 5'-deoxyadenosine + formate + L-methionine + 3 H(+). It participates in cofactor biosynthesis; thiamine diphosphate biosynthesis. Its function is as follows. Catalyzes the synthesis of the hydroxymethylpyrimidine phosphate (HMP-P) moiety of thiamine from aminoimidazole ribotide (AIR) in a radical S-adenosyl-L-methionine (SAM)-dependent reaction. This Bradyrhizobium sp. (strain ORS 278) protein is Phosphomethylpyrimidine synthase.